The primary structure comprises 156 residues: Ribosomal RNA large subunit methyltransferase H (156 aa).

Residues Leu-73, Gly-104, and 123-128 (IGPLTL) each bind S-adenosyl-L-methionine.

It belongs to the RNA methyltransferase RlmH family. As to quaternary structure, homodimer.

It localises to the cytoplasm. The enzyme catalyses pseudouridine(1915) in 23S rRNA + S-adenosyl-L-methionine = N(3)-methylpseudouridine(1915) in 23S rRNA + S-adenosyl-L-homocysteine + H(+). Its function is as follows. Specifically methylates the pseudouridine at position 1915 (m3Psi1915) in 23S rRNA. This Xanthomonas campestris pv. campestris (strain 8004) protein is Ribosomal RNA large subunit methyltransferase H.